Reading from the N-terminus, the 293-residue chain is Formamidopyrimidine-DNA glycosylase (293 aa).

Pro-2 (schiff-base intermediate with DNA) is an active-site residue. Glu-3 acts as the Proton donor in catalysis. The active-site Proton donor; for beta-elimination activity is the Lys-58. Residues His-104, Arg-123, and Lys-166 each coordinate DNA. An FPG-type zinc finger spans residues 257–293; that stretch reads QVYDREGEPCRTDGCGGVVKRFVQNGRSTFWCPKCQR. The active-site Proton donor; for delta-elimination activity is Arg-283.

It belongs to the FPG family. As to quaternary structure, monomer. It depends on Zn(2+) as a cofactor.

It carries out the reaction Hydrolysis of DNA containing ring-opened 7-methylguanine residues, releasing 2,6-diamino-4-hydroxy-5-(N-methyl)formamidopyrimidine.. It catalyses the reaction 2'-deoxyribonucleotide-(2'-deoxyribose 5'-phosphate)-2'-deoxyribonucleotide-DNA = a 3'-end 2'-deoxyribonucleotide-(2,3-dehydro-2,3-deoxyribose 5'-phosphate)-DNA + a 5'-end 5'-phospho-2'-deoxyribonucleoside-DNA + H(+). In terms of biological role, involved in base excision repair of DNA damaged by oxidation or by mutagenic agents. Acts as a DNA glycosylase that recognizes and removes damaged bases. Has a preference for oxidized purines, such as 7,8-dihydro-8-oxoguanine (8-oxoG). Has AP (apurinic/apyrimidinic) lyase activity and introduces nicks in the DNA strand. Cleaves the DNA backbone by beta-delta elimination to generate a single-strand break at the site of the removed base with both 3'- and 5'-phosphates. The sequence is that of Formamidopyrimidine-DNA glycosylase from Bradyrhizobium sp. (strain BTAi1 / ATCC BAA-1182).